Consider the following 711-residue polypeptide: Polyribonucleotide nucleotidyltransferase (711 aa).

Mg(2+) contacts are provided by aspartate 486 and aspartate 492. The KH domain occupies 553-612 (PRIHTIKINPDKIKDVIGKGGSVIRALTEETGTTIEIEDDGTVKIAATDGEKAKHAIRRI). Residues 622–690 (GRVYTGKVTR…RQGRIRLSIK (69 aa)) form the S1 motif domain. Positions 689 to 711 (IKEATEQSQPAAAPEAPAAEQGE) are disordered. Low complexity predominate over residues 694–711 (EQSQPAAAPEAPAAEQGE).

The protein belongs to the polyribonucleotide nucleotidyltransferase family. Component of the RNA degradosome, which is a multiprotein complex involved in RNA processing and mRNA degradation. Mg(2+) is required as a cofactor.

Its subcellular location is the cytoplasm. It catalyses the reaction RNA(n+1) + phosphate = RNA(n) + a ribonucleoside 5'-diphosphate. Involved in mRNA degradation. Catalyzes the phosphorolysis of single-stranded polyribonucleotides processively in the 3'- to 5'-direction. The protein is Polyribonucleotide nucleotidyltransferase of Shigella flexneri serotype 5b (strain 8401).